The chain runs to 559 residues: Probable alpha-(1-&gt;6)-mannopyranosyltransferase MSMEG_3120/MSMEI_3041 (559 aa).

Helical transmembrane passes span 41–61 (FGAT…ARPV), 81–101 (VSLT…LMLG), 202–222 (IVEA…LIVW), 247–267 (LLFM…GLML), 300–316 (WQPM…IAMS), 321–340 (LPSL…RWGG), 355–375 (ISLA…GWLF), 386–406 (WMSP…LLGL), 419–439 (AIGV…VLRG), 455–475 (VLLF…PLAA), 480–500 (PGFR…GPTA), and 507–527 (LFQI…LIAL). A compositionally biased stretch (pro residues) spans 535-548 (RPAPEPPARPPEQP). The segment at 535–559 (RPAPEPPARPPEQPAPADDAYAESP) is disordered.

It belongs to the MptA/B family.

The protein resides in the membrane. Catalyzes the addition of alpha-(1-&gt;6)-mannose residue. This Mycolicibacterium smegmatis (strain ATCC 700084 / mc(2)155) (Mycobacterium smegmatis) protein is Probable alpha-(1-&gt;6)-mannopyranosyltransferase MSMEG_3120/MSMEI_3041.